The following is a 192-amino-acid chain: uncharacterized protein (192 aa).

The Nudix hydrolase domain maps to Gln29–Ser160. Positions Gly67–Ala89 match the Nudix box motif. 2 residues coordinate Mg(2+): Glu83 and Glu87.

Belongs to the Nudix hydrolase family. PCD1 subfamily. The cofactor is Mn(2+). It depends on Mg(2+) as a cofactor.

Functionally, probably mediates the hydrolysis of some nucleoside diphosphate derivatives. This is an uncharacterized protein from Salmonella dublin (strain CT_02021853).